Reading from the N-terminus, the 304-residue chain is Oxygen-dependent coproporphyrinogen-III oxidase (304 aa).

Position 94 (serine 94) interacts with substrate. The a divalent metal cation site is built by histidine 98 and histidine 108. Residue histidine 108 is the Proton donor of the active site. A substrate-binding site is contributed by asparagine 110–arginine 112. A divalent metal cation contacts are provided by histidine 147 and histidine 177. The important for dimerization stretch occupies residues tyrosine 242 to glutamate 277. Glycine 260–arginine 262 is a binding site for substrate.

It belongs to the aerobic coproporphyrinogen-III oxidase family. In terms of assembly, homodimer. A divalent metal cation serves as cofactor.

The protein localises to the cytoplasm. It carries out the reaction coproporphyrinogen III + O2 + 2 H(+) = protoporphyrinogen IX + 2 CO2 + 2 H2O. It functions in the pathway porphyrin-containing compound metabolism; protoporphyrin-IX biosynthesis; protoporphyrinogen-IX from coproporphyrinogen-III (O2 route): step 1/1. Involved in the heme biosynthesis. Catalyzes the aerobic oxidative decarboxylation of propionate groups of rings A and B of coproporphyrinogen-III to yield the vinyl groups in protoporphyrinogen-IX. This is Oxygen-dependent coproporphyrinogen-III oxidase from Shewanella piezotolerans (strain WP3 / JCM 13877).